A 490-amino-acid chain; its full sequence is Cytochrome P450 monooxygenase aclL (490 aa).

The helical transmembrane segment at 1-21 (MLFSLGPLTIVYGLVIFVVAK) threads the bilayer. Asparagine 176 carries N-linked (GlcNAc...) asparagine glycosylation. Residue cysteine 434 participates in heme binding.

Belongs to the cytochrome P450 family. Heme is required as a cofactor.

It is found in the membrane. It participates in mycotoxin biosynthesis. Functionally, cytochrome P450 monooxygenase; part of the gene cluster that mediates the biosynthesis of aspirochlorine (or antibiotic A30641), an unusual halogenated spiro compound with distinctive antifungal properties due to selective inhibition of protein biosynthesis, and which is also active against bacteria, viruses, and murine tumor cells. The non-ribosomal peptide synthetase (NRPS) aclP is responsible the formation of the diketopiperazine (DKP) core from the condensation of 2 phenylalanine residues. One Phe residue is tailored into chlorotyrosine by hydroxylation and chlorination, whereas the second Phe undergoes an unprecedented C-C bond cleavage to be converted into glycine. After formation of the DKP, sulfur is incorporated into the DKP by conjugation with glutathione by aclG, followed by its stepwise degradation to the thiol by aclI, aclJ and aclK, and the dithiol oxidation by aclT. In addition, oxygenases (aclB, aclC, aclL and aclO) and O-methyltransferases (aclM and aclU) act as tailoring enzymes to produce the intermediate dechloroaspirochlorine. Ultimately, chlorination of dechloroaspirochlorine by the halogenase aclH is the last step in the aspirochlorine pathway. This chain is Cytochrome P450 monooxygenase aclL, found in Aspergillus oryzae (strain ATCC 42149 / RIB 40) (Yellow koji mold).